We begin with the raw amino-acid sequence, 406 residues long: Argininosuccinate synthase (406 aa).

ATP-binding positions include 14–22 (AYSGGLDTS) and alanine 41. Tyrosine 92 and serine 97 together coordinate L-citrulline. Glycine 122 provides a ligand contact to ATP. Threonine 124, asparagine 128, and aspartate 129 together coordinate L-aspartate. Residue asparagine 128 coordinates L-citrulline. Positions 132, 181, 190, 266, and 278 each coordinate L-citrulline.

It belongs to the argininosuccinate synthase family. Type 1 subfamily. In terms of assembly, homotetramer.

The protein localises to the cytoplasm. The catalysed reaction is L-citrulline + L-aspartate + ATP = 2-(N(omega)-L-arginino)succinate + AMP + diphosphate + H(+). It participates in amino-acid biosynthesis; L-arginine biosynthesis; L-arginine from L-ornithine and carbamoyl phosphate: step 2/3. The chain is Argininosuccinate synthase from Geobacter sulfurreducens (strain ATCC 51573 / DSM 12127 / PCA).